A 351-amino-acid chain; its full sequence is Ferrochelatase (351 aa).

H220 and E301 together coordinate Fe cation.

Belongs to the ferrochelatase family.

The protein localises to the cytoplasm. The enzyme catalyses heme b + 2 H(+) = protoporphyrin IX + Fe(2+). It functions in the pathway porphyrin-containing compound metabolism; protoheme biosynthesis; protoheme from protoporphyrin-IX: step 1/1. Its function is as follows. Catalyzes the ferrous insertion into protoporphyrin IX. This Rhodobacter capsulatus (Rhodopseudomonas capsulata) protein is Ferrochelatase.